Consider the following 458-residue polypeptide: UPF0210 protein MmarC5_0151 (458 aa).

Belongs to the UPF0210 family.

In Methanococcus maripaludis (strain C5 / ATCC BAA-1333), this protein is UPF0210 protein MmarC5_0151.